We begin with the raw amino-acid sequence, 559 residues long: Innexin-10 (559 aa).

The next 4 helical transmembrane spans lie at 28 to 48 (YFTCNLLIGLAVLVSFKQFGG), 102 to 122 (QWVPFFLLLEAACFRLPSLLW), 182 to 202 (FLWLFNLPYSAFFVTAMYLCT), and 283 to 303 (IFILLWFWYLALLVFTFGSFF). Disordered stretches follow at residues 488 to 514 (EEKQNQQNATQPPYCYTNQNPTPYQNQ) and 527 to 559 (YRTPSLSRGTDSRPVSTATDTDQTKKQSMSTFK). Low complexity predominate over residues 503 to 514 (YTNQNPTPYQNQ). Residues 528 to 559 (RTPSLSRGTDSRPVSTATDTDQTKKQSMSTFK) are compositionally biased toward polar residues.

This sequence belongs to the pannexin family.

The protein localises to the cell membrane. It localises to the cell junction. It is found in the gap junction. In terms of biological role, structural component of the gap junctions. The polypeptide is Innexin-10 (inx-10) (Caenorhabditis elegans).